A 232-amino-acid polypeptide reads, in one-letter code: Ribonuclease 3 (232 aa).

One can recognise an RNase III domain in the interval 7–135 (IQAVESKLKF…ILGAVYLDGG (129 aa)). E48 lines the Mg(2+) pocket. D52 is an active-site residue. Residues N121 and E124 each coordinate Mg(2+). Residue E124 is part of the active site. One can recognise a DRBM domain in the interval 160-229 (NPKNRLQQFT…AKQALSTHDD (70 aa)).

It belongs to the ribonuclease III family. As to quaternary structure, homodimer. The cofactor is Mg(2+).

Its subcellular location is the cytoplasm. It carries out the reaction Endonucleolytic cleavage to 5'-phosphomonoester.. Functionally, digests double-stranded RNA. Involved in the processing of primary rRNA transcript to yield the immediate precursors to the large and small rRNAs (23S and 16S). Processes some mRNAs, and tRNAs when they are encoded in the rRNA operon. Processes pre-crRNA and tracrRNA of type II CRISPR loci if present in the organism. The chain is Ribonuclease 3 from Chlamydia muridarum (strain MoPn / Nigg).